The sequence spans 481 residues: Sterol 14-alpha demethylase (481 aa).

Residues 1 to 21 traverse the membrane as a helical segment; it reads MFIEAIVLALTALILYSVYSV. C422 lines the heme pocket.

This sequence belongs to the cytochrome P450 family. It depends on heme as a cofactor.

The protein resides in the membrane. The catalysed reaction is a 14alpha-methyl steroid + 3 reduced [NADPH--hemoprotein reductase] + 3 O2 = a Delta(14) steroid + formate + 3 oxidized [NADPH--hemoprotein reductase] + 4 H2O + 4 H(+). Its pathway is steroid biosynthesis; zymosterol biosynthesis; zymosterol from lanosterol: step 1/6. Its function is as follows. Catalyzes C14-demethylation of lanosterol which is critical for ergosterol biosynthesis. It transforms lanosterol into 4,4'-dimethyl cholesta-8,14,24-triene-3-beta-ol. Favors C4 dimethylated substrates, the substrate preference order is 24-methylenedihydrolanosterol &gt; 24,25-dihydrolanosterol &gt; lanosterol &gt; obtusifoliol &gt; norlanosterol. The chain is Sterol 14-alpha demethylase from Trypanosoma cruzi (strain CL Brener).